A 647-amino-acid chain; its full sequence is Microtubule-associated protein 9 (647 aa).

The residue at position 2 (serine 2) is an N-acetylserine. Phosphotyrosine is present on tyrosine 12. 6 disordered regions span residues 127-323 (KSFS…ELIM), 344-421 (SATA…PDRA), 491-514 (KRLEEKNKKKTEEENAARKGEALQ), 530-553 (KNRKEREYERAKKQKEEETVAEKK), 580-600 (NEKRKEELKRAEKKDKDKQAI), and 613-647 (QERIERKQKKRHSFLESEALPPWSPPSRTVFAKVF). A compositionally biased stretch (basic and acidic residues) spans 133–145 (QNKDEEFEKDKIK). A compositionally biased stretch (polar residues) spans 155–166 (IKSTSSAENNSL). Basic residues predominate over residues 174 to 186 (PSPRPRSMLKKKS). Positions 184–210 (KKSHMEEKDGLEDKETALSEELELHSA) form a coiled coil. Over residues 187–200 (HMEEKDGLEDKETA) the composition is skewed to basic and acidic residues. Polar residues-rich tracts occupy residues 210-219 (APSSLPTPNG) and 239-249 (CLTSLASSSLK). Over residues 268–287 (DPNEEITENHNSLKSDENKE) the composition is skewed to basic and acidic residues. Residues 298–328 (AVEKSKESQVTADDLEEEKAKAELIMDDDRT) are a coiled coil. Residues 365–374 (NNRASSASAR) show a composition bias toward low complexity. Residues 443–628 (MHRIKRIESE…KQKKRHSFLE (186 aa)) adopt a coiled-coil conformation.

In terms of assembly, binds to purified microtubules via its C-terminus.

It is found in the cytoplasm. Its subcellular location is the cytoskeleton. The protein localises to the spindle. Involved in organization of the bipolar mitotic spindle. Required for bipolar spindle assembly, mitosis progression and cytokinesis. May act by stabilizing interphase microtubules. This is Microtubule-associated protein 9 (MAP9) from Homo sapiens (Human).